Reading from the N-terminus, the 154-residue chain is Low molecular weight protein-tyrosine-phosphatase PtpA (154 aa).

The Nucleophile role is filled by C8. The active site involves R14. D120 (proton donor) is an active-site residue.

This sequence belongs to the low molecular weight phosphotyrosine protein phosphatase family. As to quaternary structure, interacts with host CORO1A. Post-translationally, phosphorylations at Tyr-122 and Tyr-123 are essential for phosphatase activity.

Its subcellular location is the secreted. It carries out the reaction O-phospho-L-tyrosyl-[protein] + H2O = L-tyrosyl-[protein] + phosphate. Secreted tyrosine phosphatase that plays a critical role during infection as a bacterial effector protein that counteracts host defenses. Required for intramacrophage survival. In Staphylococcus aureus (strain MSSA476), this protein is Low molecular weight protein-tyrosine-phosphatase PtpA (ptpA).